Here is a 544-residue protein sequence, read N- to C-terminus: Homeobox protein B-H1 (544 aa).

Residues serine 53 to glycine 70 show a composition bias toward low complexity. 4 disordered regions span residues serine 53–asparagine 73, tyrosine 92–alanine 179, glycine 236–aspartate 308, and alanine 471–valine 544. Over residues glutamine 95 to asparagine 105 the composition is skewed to basic residues. Low complexity predominate over residues asparagine 106 to asparagine 131. The span at threonine 156–leucine 172 shows a compositional bias: basic residues. Positions aspartate 247 to aspartate 262 are enriched in acidic residues. Residues methionine 266–asparagine 282 are compositionally biased toward basic and acidic residues. Residues serine 283–serine 293 are compositionally biased toward polar residues. The homeobox DNA-binding region spans glutamine 299–threonine 358. Residues glycine 476 to serine 485 show a composition bias toward pro residues. Positions proline 492–alanine 506 are enriched in low complexity. The span at serine 507 to proline 516 shows a compositional bias: pro residues.

Belongs to the Antp homeobox family. In terms of tissue distribution, B-H1 and B-H2 are abundant in the eye-antenna imaginal disk. Expressed in R1 and R6 cells throughout larval stage until 30 hours after puparium formation, at which time expression is seen in the anterior and posterior primary pigment cells. Coexpressed in embryonic glial cells, neurons of the CNS and PNS, most latitudinal anterior cells of the developing notum and the central circular region of the leg and antennal imaginal disk throughout larval development.

It is found in the nucleus. In terms of biological role, B-H1 and B-H2 are regulated by members of the wg signaling pathway; wg and dpp. B-H1 and B-H2 are coexpressed and functionally required in R1 and R6 receptor cells and primary pigment cells for normal eye development. Coexpression is also required for the fate determination of external sensory organs, formation of notal microchaetae, formation of presutural macrochaetae, antennal development and for distal leg morphogenesis; segmentation and specification of tarsal segments 3-5. This chain is Homeobox protein B-H1 (B-H1), found in Drosophila melanogaster (Fruit fly).